A 198-amino-acid chain; its full sequence is Glycerol-3-phosphate acyltransferase (198 aa).

5 consecutive transmembrane segments (helical) span residues 6–26 (FLPV…GLVL), 56–78 (LAAG…AGYI), 83–101 (AAMA…PVWL), 113–133 (IGIL…LWLA), and 155–175 (FLWW…TLLL).

Belongs to the PlsY family. In terms of assembly, probably interacts with PlsX.

The protein resides in the cell inner membrane. It catalyses the reaction an acyl phosphate + sn-glycerol 3-phosphate = a 1-acyl-sn-glycero-3-phosphate + phosphate. It participates in lipid metabolism; phospholipid metabolism. Catalyzes the transfer of an acyl group from acyl-phosphate (acyl-PO(4)) to glycerol-3-phosphate (G3P) to form lysophosphatidic acid (LPA). This enzyme utilizes acyl-phosphate as fatty acyl donor, but not acyl-CoA or acyl-ACP. The chain is Glycerol-3-phosphate acyltransferase from Bradyrhizobium diazoefficiens (strain JCM 10833 / BCRC 13528 / IAM 13628 / NBRC 14792 / USDA 110).